We begin with the raw amino-acid sequence, 470 residues long: ATP synthase subunit beta (470 aa).

158–165 (GGAGVGKT) is an ATP binding site.

The protein belongs to the ATPase alpha/beta chains family. F-type ATPases have 2 components, CF(1) - the catalytic core - and CF(0) - the membrane proton channel. CF(1) has five subunits: alpha(3), beta(3), gamma(1), delta(1), epsilon(1). CF(0) has three main subunits: a(1), b(2) and c(9-12). The alpha and beta chains form an alternating ring which encloses part of the gamma chain. CF(1) is attached to CF(0) by a central stalk formed by the gamma and epsilon chains, while a peripheral stalk is formed by the delta and b chains.

Its subcellular location is the cell membrane. The catalysed reaction is ATP + H2O + 4 H(+)(in) = ADP + phosphate + 5 H(+)(out). Its function is as follows. Produces ATP from ADP in the presence of a proton gradient across the membrane. The catalytic sites are hosted primarily by the beta subunits. This Alkalihalophilus pseudofirmus (strain ATCC BAA-2126 / JCM 17055 / OF4) (Bacillus pseudofirmus) protein is ATP synthase subunit beta.